Consider the following 178-residue polypeptide: Large ribosomal subunit protein uL10 (178 aa).

This sequence belongs to the universal ribosomal protein uL10 family. Part of the ribosomal stalk of the 50S ribosomal subunit. The N-terminus interacts with L11 and the large rRNA to form the base of the stalk. The C-terminus forms an elongated spine to which L12 dimers bind in a sequential fashion forming a multimeric L10(L12)X complex.

In terms of biological role, forms part of the ribosomal stalk, playing a central role in the interaction of the ribosome with GTP-bound translation factors. The protein is Large ribosomal subunit protein uL10 of Mycobacterium tuberculosis (strain ATCC 25177 / H37Ra).